Reading from the N-terminus, the 572-residue chain is Flagellin A (572 aa).

The protein belongs to the bacterial flagellin family. In terms of assembly, heteromer of FlaA and FlaB. Interacts with FliW.

The protein localises to the secreted. The protein resides in the bacterial flagellum. Functionally, flagellin is the subunit protein which polymerizes to form the filaments of bacterial flagella. FlaA binds to flagellar assembly factor FliW protein, preventing FliW from binding to CsrA, so that CsrA can then bind flaA mRNA and represses its translation. The protein is Flagellin A (flaA) of Campylobacter jejuni subsp. jejuni serotype O:2 (strain ATCC 700819 / NCTC 11168).